A 352-amino-acid polypeptide reads, in one-letter code: RNA 3'-terminal phosphate cyclase (352 aa).

ATP-binding positions include Gln100 and 297 to 301; that span reads HLADQ. His322 serves as the catalytic Tele-AMP-histidine intermediate.

This sequence belongs to the RNA 3'-terminal cyclase family. Type 1 subfamily.

It is found in the cytoplasm. It catalyses the reaction a 3'-end 3'-phospho-ribonucleotide-RNA + ATP = a 3'-end 2',3'-cyclophospho-ribonucleotide-RNA + AMP + diphosphate. In terms of biological role, catalyzes the conversion of 3'-phosphate to a 2',3'-cyclic phosphodiester at the end of RNA. The mechanism of action of the enzyme occurs in 3 steps: (A) adenylation of the enzyme by ATP; (B) transfer of adenylate to an RNA-N3'P to produce RNA-N3'PP5'A; (C) and attack of the adjacent 2'-hydroxyl on the 3'-phosphorus in the diester linkage to produce the cyclic end product. The biological role of this enzyme is unknown but it is likely to function in some aspects of cellular RNA processing. This is RNA 3'-terminal phosphate cyclase from Methanosarcina mazei (strain ATCC BAA-159 / DSM 3647 / Goe1 / Go1 / JCM 11833 / OCM 88) (Methanosarcina frisia).